Reading from the N-terminus, the 178-residue chain is Large ribosomal subunit protein uL6 (178 aa).

This sequence belongs to the universal ribosomal protein uL6 family. In terms of assembly, part of the 50S ribosomal subunit.

This protein binds to the 23S rRNA, and is important in its secondary structure. It is located near the subunit interface in the base of the L7/L12 stalk, and near the tRNA binding site of the peptidyltransferase center. This chain is Large ribosomal subunit protein uL6, found in Streptococcus pneumoniae serotype 4 (strain ATCC BAA-334 / TIGR4).